The following is a 180-amino-acid chain: Nucleoside triphosphate/diphosphate phosphatase (180 aa).

R26 acts as the Proton donor in catalysis. Mg(2+) is bound by residues N90, D106, D108, D110, D123, and E126.

It belongs to the Ntdp family. Mg(2+) is required as a cofactor.

It carries out the reaction a ribonucleoside 5'-triphosphate + H2O = a ribonucleoside 5'-diphosphate + phosphate + H(+). It catalyses the reaction a ribonucleoside 5'-diphosphate + H2O = a ribonucleoside 5'-phosphate + phosphate + H(+). Functionally, has nucleoside phosphatase activity towards nucleoside triphosphates and nucleoside diphosphates. This Staphylococcus epidermidis (strain ATCC 35984 / DSM 28319 / BCRC 17069 / CCUG 31568 / BM 3577 / RP62A) protein is Nucleoside triphosphate/diphosphate phosphatase.